Consider the following 125-residue polypeptide: Small ribosomal subunit protein uS12 (125 aa).

The interval 1–31 (MPTINQLVRHGRQTEVTKSKSPAMQGGPQRR) is disordered. Asp89 is modified (3-methylthioaspartic acid). Positions 105-125 (QGVKDRKQSRSKYGAKRPKKA) are disordered. A compositionally biased stretch (basic residues) spans 113-125 (SRSKYGAKRPKKA).

It belongs to the universal ribosomal protein uS12 family. In terms of assembly, part of the 30S ribosomal subunit. Contacts proteins S8 and S17. May interact with IF1 in the 30S initiation complex.

Its function is as follows. With S4 and S5 plays an important role in translational accuracy. Functionally, interacts with and stabilizes bases of the 16S rRNA that are involved in tRNA selection in the A site and with the mRNA backbone. Located at the interface of the 30S and 50S subunits, it traverses the body of the 30S subunit contacting proteins on the other side and probably holding the rRNA structure together. The combined cluster of proteins S8, S12 and S17 appears to hold together the shoulder and platform of the 30S subunit. This is Small ribosomal subunit protein uS12 from Methylibium petroleiphilum (strain ATCC BAA-1232 / LMG 22953 / PM1).